Consider the following 91-residue polypeptide: Secretoglobin family 3A member 2 (91 aa).

The first 21 residues, 1–21 (MKLVSIFLLVTIGICGYSATA), serve as a signal peptide directing secretion.

It belongs to the secretoglobin family. UGRP subfamily. Homodimer; disulfide-linked. Monomer. Interacts with APOA1. In terms of tissue distribution, highly expressed in lung where it localizes to epithelial cells of the trachea, bronchus and bronchioles (at protein level). Expressed in club cells of the bronchioles. Also detected in the anterior and posterior lobes of the pituitary gland where it may localize to gonadotropic cells (at protein level). Not detected in other tissues tested.

Its subcellular location is the secreted. In terms of biological role, secreted cytokine-like protein. Binds to the scavenger receptor MARCO. Can also bind to pathogens including the Gram-positive bacterium L.monocytogenes, the Gram-negative bacterium P.aeruginosa, and yeast. Strongly inhibits phospholipase A2 (PLA2G1B) activity. Seems to have anti-inflammatory effects in respiratory epithelium. Also has anti-fibrotic activity in lung. May play a role in fetal lung development and maturation. Promotes branching morphogenesis during early stages of lung development. In the pituitary, may inhibit production of follicle-stimulating hormone (FSH) and luteinizing hormone (LH). This is Secretoglobin family 3A member 2 (Scgb3a2) from Mus musculus (Mouse).